A 305-amino-acid polypeptide reads, in one-letter code: Tyrosine recombinase XerD (305 aa).

The region spanning 9-94 is the Core-binding (CB) domain; sequence MQDFGYVEQF…AIRRLFQYLH (86 aa). The Tyr recombinase domain maps to 115-299; it reads RLPKDISEEQ…ATERLKQIHS (185 aa). Catalysis depends on residues Arg155, Lys179, His251, Arg254, and His277. Catalysis depends on Tyr286, which acts as the O-(3'-phospho-DNA)-tyrosine intermediate.

Belongs to the 'phage' integrase family. XerD subfamily. As to quaternary structure, forms a cyclic heterotetrameric complex composed of two molecules of XerC and two molecules of XerD.

The protein localises to the cytoplasm. Site-specific tyrosine recombinase, which acts by catalyzing the cutting and rejoining of the recombining DNA molecules. The XerC-XerD complex is essential to convert dimers of the bacterial chromosome into monomers to permit their segregation at cell division. It also contributes to the segregational stability of plasmids. The polypeptide is Tyrosine recombinase XerD (Vibrio vulnificus (strain CMCP6)).